The following is an 86-amino-acid chain: Candiduxin-2 (86 aa).

The signal sequence occupies residues 1 to 21; it reads MKTLLLTLVVLTIACLDLGYT. Cystine bridges form between Cys24–Cys45, Cys38–Cys62, Cys66–Cys78, and Cys79–Cys84.

It belongs to the three-finger toxin family. Short-chain subfamily. Orphan group IX sub-subfamily. In terms of tissue distribution, expressed by the venom gland.

Its subcellular location is the secreted. This Bungarus candidus (Malayan krait) protein is Candiduxin-2.